Reading from the N-terminus, the 178-residue chain is Conodipine-P2 (178 aa).

The first 24 residues, 1-24 (MKLLAPVLWAMAALGVTWLVAVDS), serve as a signal peptide directing secretion. 4-hydroxyproline is present on residues proline 38, proline 42, and proline 49. Residue histidine 54 is part of the active site. The propeptide at 98 to 130 (KREVTSHRATSIAHSRLWKTALDQKSFLNRKAR) is interchain peptide. Residue glutamine 131 is modified to Pyrrolidone carboxylic acid. Position 137 is a 4-hydroxyproline (proline 137).

Belongs to the phospholipase A2 family. Group IX subfamily. Heterodimer of an alpha and a beta chain; probably disulfide-linked. It depends on Ca(2+) as a cofactor. Expressed by the venom duct.

It localises to the secreted. It carries out the reaction a 1,2-diacyl-sn-glycero-3-phosphocholine + H2O = a 1-acyl-sn-glycero-3-phosphocholine + a fatty acid + H(+). Catalyzes the calcium-dependent hydrolysis of the 2-acyl groups in 3-sn-phosphoglycerides. This is Conodipine-P2 from Conus purpurascens (Purple cone).